The primary structure comprises 614 residues: Fimbrin (614 aa).

2 consecutive EF-hand domains span residues 16-50 and 51-86; these read EEIL…DSKK and GSYD…LKKG. Residues Asp-29, Asp-31, Tyr-35, Thr-40, Asp-66, Ser-68, Arg-70, and Asp-75 each contribute to the Ca(2+) site. Actin-binding regions lie at residues 98 to 368 and 369 to 614; these read TIKG…GLEP and LNEE…LMAV. 4 Calponin-homology (CH) domains span residues 112–233, 261–364, 385–495, and 508–614; these read EEER…RRGL, LPPE…NTHP, EREA…RMNI, and TLSD…LMAV.

It localises to the cytoplasm. Its subcellular location is the cytoskeleton. The protein localises to the actin patch. In terms of biological role, binds to actin, and functionally associates with actin structures involved in the development and maintenance of cell polarity. Plays a role in cytokinesis. Plays important roles in mating and in spore formation. This chain is Fimbrin (fim1), found in Schizosaccharomyces pombe (strain 972 / ATCC 24843) (Fission yeast).